Here is a 409-residue protein sequence, read N- to C-terminus: Phenoxybenzoate dioxygenase subunit alpha (409 aa).

The Rieske domain occupies W45–A149. Positions 85, 87, 104, and 107 each coordinate [2Fe-2S] cluster. Positions 210 and 215 each coordinate Fe cation.

This sequence belongs to the bacterial ring-hydroxylating dioxygenase alpha subunit family. As to quaternary structure, this dioxygenase system consists of two proteins: the alpha subunit (PobA) and a subunit (PobB) that acts as a ferredoxin and a ferredoxin reductase. Requires [2Fe-2S] cluster as cofactor. Fe cation is required as a cofactor.

The protein operates within aromatic compound metabolism; carboxydiphenyl ether degradation. In terms of biological role, degrades exclusively diarylether compounds having carboxyl groups in the 3- or 4-position. Yields a hemiacetal that spontaneously hydrolyzes to phenol and protocatechuate. This is Phenoxybenzoate dioxygenase subunit alpha (pobA) from Ectopseudomonas oleovorans (Pseudomonas oleovorans).